Reading from the N-terminus, the 235-residue chain is 5'-methylthioadenosine/S-adenosylhomocysteine nucleosidase (235 aa).

Glu13 serves as the catalytic Proton acceptor. Residues Gly79, Met154, and 175-176 contribute to the substrate site; that span reads ME. Asp199 serves as the catalytic Proton donor.

It belongs to the PNP/UDP phosphorylase family. MtnN subfamily.

The enzyme catalyses S-adenosyl-L-homocysteine + H2O = S-(5-deoxy-D-ribos-5-yl)-L-homocysteine + adenine. It carries out the reaction S-methyl-5'-thioadenosine + H2O = 5-(methylsulfanyl)-D-ribose + adenine. The catalysed reaction is 5'-deoxyadenosine + H2O = 5-deoxy-D-ribose + adenine. The protein operates within amino-acid biosynthesis; L-methionine biosynthesis via salvage pathway; S-methyl-5-thio-alpha-D-ribose 1-phosphate from S-methyl-5'-thioadenosine (hydrolase route): step 1/2. In terms of biological role, catalyzes the irreversible cleavage of the glycosidic bond in both 5'-methylthioadenosine (MTA) and S-adenosylhomocysteine (SAH/AdoHcy) to adenine and the corresponding thioribose, 5'-methylthioribose and S-ribosylhomocysteine, respectively. Also cleaves 5'-deoxyadenosine, a toxic by-product of radical S-adenosylmethionine (SAM) enzymes, into 5-deoxyribose and adenine. This chain is 5'-methylthioadenosine/S-adenosylhomocysteine nucleosidase, found in Chromohalobacter salexigens (strain ATCC BAA-138 / DSM 3043 / CIP 106854 / NCIMB 13768 / 1H11).